Consider the following 576-residue polypeptide: Mitogen-activated protein kinase 15 (576 aa).

Residues 20–50 are disordered; that stretch reads RPSSSSSSNNHDQIQNPPTVSNPNDDEDLKK. A compositionally biased stretch (polar residues) spans 28–42; it reads NNHDQIQNPPTVSNP. The Protein kinase domain maps to 90-381; the sequence is YQIQEVVGKG…AEEALADPYF (292 aa). Residues 96-104 and K119 each bind ATP; that span reads VGKGSYGVV. Residue D216 is the Proton acceptor of the active site. T252 carries the post-translational modification Phosphothreonine. Residues 252–254 carry the TXY motif; that stretch reads TDY. A Phosphotyrosine modification is found at Y254. T257 carries the post-translational modification Phosphothreonine. A disordered region spans residues 458–535; the sequence is EENQGPGGRS…GGGYSARNLM (78 aa). Residues 477–501 show a composition bias toward basic and acidic residues; it reads LPRERVPASKNETVEERSNDIERRT. Residues 504–520 are compositionally biased toward polar residues; that stretch reads AVASTLDSPKASQQAEG.

This sequence belongs to the protein kinase superfamily. CMGC Ser/Thr protein kinase family. MAP kinase subfamily. Interacts with MKK7. In terms of processing, dually phosphorylated on Thr-252 and Tyr-254, which activates the enzyme.

The enzyme catalyses L-seryl-[protein] + ATP = O-phospho-L-seryl-[protein] + ADP + H(+). The catalysed reaction is L-threonyl-[protein] + ATP = O-phospho-L-threonyl-[protein] + ADP + H(+). Activated by threonine and tyrosine phosphorylation. This Arabidopsis thaliana (Mouse-ear cress) protein is Mitogen-activated protein kinase 15 (MPK15).